The chain runs to 277 residues: MSLRFTKMHGLGNDFVVIDAIRQSVDLTPEQVRRLADRHFGIGCDQLLVVEEATRPDVDFRYRIFNADGGEVEQCGNGARCFVRFVHEQGLTAKRRIRVETRSGIIAPQLEDDGLVTVDMGVPVLEPARVPFVSDSDAIVQPLDVGGETVAITAVSMGNPHAVQVVADVDAAPVAAQGALIERHPRFPARVNAGFVQVVDAHRIRLRVFERGAGETLACGTGACAAVVTVILRELAQSPVRVETRGGELDIAWEGPGQPVLMTGPAVTVFAGEIDVD.

3 residues coordinate substrate: Asn-13, Gln-46, and Asn-66. Cys-75 functions as the Proton donor in the catalytic mechanism. Residues 76 to 77 (GN), Asn-159, Asn-192, and 210 to 211 (ER) contribute to the substrate site. The Proton acceptor role is filled by Cys-219. A substrate-binding site is contributed by 220 to 221 (GT).

This sequence belongs to the diaminopimelate epimerase family. Homodimer.

It is found in the cytoplasm. The enzyme catalyses (2S,6S)-2,6-diaminopimelate = meso-2,6-diaminopimelate. It participates in amino-acid biosynthesis; L-lysine biosynthesis via DAP pathway; DL-2,6-diaminopimelate from LL-2,6-diaminopimelate: step 1/1. In terms of biological role, catalyzes the stereoinversion of LL-2,6-diaminopimelate (L,L-DAP) to meso-diaminopimelate (meso-DAP), a precursor of L-lysine and an essential component of the bacterial peptidoglycan. The chain is Diaminopimelate epimerase from Aromatoleum aromaticum (strain DSM 19018 / LMG 30748 / EbN1) (Azoarcus sp. (strain EbN1)).